The sequence spans 312 residues: Ribosomal RNA small subunit methyltransferase H (312 aa).

Residues 33–35 (GGY), Asp-51, Phe-78, Asp-97, and Gln-104 contribute to the S-adenosyl-L-methionine site.

It belongs to the methyltransferase superfamily. RsmH family.

Its subcellular location is the cytoplasm. The catalysed reaction is cytidine(1402) in 16S rRNA + S-adenosyl-L-methionine = N(4)-methylcytidine(1402) in 16S rRNA + S-adenosyl-L-homocysteine + H(+). Specifically methylates the N4 position of cytidine in position 1402 (C1402) of 16S rRNA. The polypeptide is Ribosomal RNA small subunit methyltransferase H (Orientia tsutsugamushi (strain Ikeda) (Rickettsia tsutsugamushi)).